Here is a 1017-residue protein sequence, read N- to C-terminus: MAQSNMPHKSDVLSQDELRKKLYQTFKDRGVLDTLQTQLRNQLIHELMHPVLSGEVKPPSISVEGSALLIGASNSLVADHLQRCGYEYSLSVFFPESGLAKEKIFTMQDLLQLIRINPSSSLYKSLISGFDKENKKGFLMSFLKELAEYYQAKESCDAETQTSTTFPSQVSLAEKFQLIDAQFADGFPHRSKLESLETKLNEYKKEVQHQLQVEMCHKLKYFREAEITKVKMEERRKYEKELAEFQNEFERTCQAKNEALISQEKNSLERIKKHREMESKEIYAQRQLLLNDIALLRGREAELKERIETFELTQKLQEEKIKSEAEALERREQNLKNIEDTYDQKLKTELLKYQLELKDDYITRTNKLLEEERKNKEKTIHLQEELTVINSKKEELSKSVKHMKEVELELESVKAQFLAISKQNHLLNEKVREMSDYSQLKEEKVELQAQNKLLKLQLEETRNENLRLLDRITQPPPELVIFQKELQKTEKAMELEHKDFETHRQALEKQLQSEIENSAQLRTQIAEYDASVKRLTVQVAELKSQLKQTQIALENEVYRNPKHSLIHSLSGLLLSGKMAPHSEDKSGDFLNVPLEQNKVIAGAVMSRVPPYVNTATEASSPESDFEFIASSTKAKVRELEQEAERLEKAFRTYYQRATQNPSTSPQPAKSPPSVNSVAALRSIASSSMDRPVSAEDRVVSEQPLGDMLKEEMSDMSKAFMGSVVSRPRRTSSSTRLSSTPHPKSRRSLDNEMYLEGLGRLHMTSSSPLLDRVSASPAASPSPCPERTAQASPVPSRHSFSGLPEQNACLYQRQTETQDKSELSNVDKQSLKDEKFEPPFRWNKTEQFEAEGLHPAGDMPGIDFAVATQSSRLISYDYPSAVQSQTGEQDEQELWELHMKERRQREEQRHNERQEALERERRELGKLEQERRMIEESLKMEMEEELEKSVQDQKDKSAHCENTLEKYMKIIQQRQEESNADKSSKKSGKECSLVDMMMPSDKDESSPGFSHEEPDDMW.

The region spanning 69–101 (LIGASNSLVADHLQRCGYEYSLSVFFPESGLAK) is the LisH domain. Coiled coils occupy residues 188-557 (PHRS…ENEV) and 626-659 (EFIASSTKAKVRELEQEAERLEKAFRTYYQRATQ). The interval 609 to 666 (PPYVNTATEASSPESDFEFIASSTKAKVRELEQEAERLEKAFRTYYQRATQNPSTSPQ) is mediates homooligomerization. Disordered regions lie at residues 657-676 (ATQNPSTSPQPAKSPPSVNS), 685-705 (SSSMDRPVSAEDRVVSEQPLG), 721-749 (GSVVSRPRRTSSSTRLSSTPHPKSRRSLD), and 769-801 (LDRVSASPAASPSPCPERTAQASPVPSRHSFSG). A phosphoserine mark is found at serine 664, serine 670, serine 687, serine 722, serine 737, serine 747, serine 791, and serine 823. Over residues 722–740 (SVVSRPRRTSSSTRLSSTP) the composition is skewed to low complexity. A coiled-coil region spans residues 895–966 (ELHMKERRQR…AHCENTLEKY (72 aa)). Residues 897-988 (HMKERRQREE…ADKSSKKSGK (92 aa)) show a composition bias toward basic and acidic residues. The interval 897 to 1017 (HMKERRQREE…FSHEEPDDMW (121 aa)) is disordered.

This sequence belongs to the OFD1 family. Homooligomer. Interacts with LCA5. Interacts with RUVBL1; the interaction is direct and may mediate interaction with the NuA4 histone acetyltransferase complex. Interacts with SDCCAG8; the interaction is direct. Interacts with MAP1LC3B. Interacts with C2CD3; OFD1 may act as a negative regulator of C2CD3. Forms a complex with KIAA0753/OFIP and CEP20/FOR20; the interaction with CEP20 is detected only in the presence of KIAA0753. Interacts with PCM1; this interaction may be mediated by KIAA0753/OFIP. Interacts with TBC1D31; regulates OFD1 activity in cilium assembly. Post-translationally, phosphorylated. Phosphorylation at Ser-737, by the cAMP-dependent protein kinase PKA, triggers ubiquitination and proteasomal degradation of OFD1. Also increases its interaction with TBC1D31 and regulates its function in ciliogenesis. Ubiquitinated by PJA2, upon phosphorylation at Ser-737 by PKA, leads to the proteasomal degradation of OFD1.

The protein resides in the cytoplasm. The protein localises to the cytoskeleton. Its subcellular location is the microtubule organizing center. It is found in the centrosome. It localises to the centriole. The protein resides in the centriolar satellite. The protein localises to the cilium basal body. Its subcellular location is the nucleus. Functionally, component of the centrioles controlling mother and daughter centrioles length. Recruits to the centriole IFT88 and centriole distal appendage-specific proteins including CEP164. Involved in the biogenesis of the cilium, a centriole-associated function. The cilium is a cell surface projection found in many vertebrate cells required to transduce signals important for development and tissue homeostasis. Plays an important role in development by regulating Wnt signaling and the specification of the left-right axis. Only OFD1 localized at the centriolar satellites is removed by autophagy, which is an important step in the ciliogenesis regulation. The polypeptide is Centriole and centriolar satellite protein OFD1 (Ofd1) (Mus musculus (Mouse)).